A 247-amino-acid chain; its full sequence is Adenosylcobinamide-GDP ribazoletransferase (247 aa).

A run of 5 helical transmembrane segments spans residues 34–54 (IVMF…IFIL), 59–79 (CGIP…TGGF), 113–133 (GGLA…ELAL), 138–158 (MLAA…LLMY), and 187–207 (LAVI…AMVV).

Belongs to the CobS family. Requires Mg(2+) as cofactor.

The protein resides in the cell inner membrane. The enzyme catalyses alpha-ribazole + adenosylcob(III)inamide-GDP = adenosylcob(III)alamin + GMP + H(+). The catalysed reaction is alpha-ribazole 5'-phosphate + adenosylcob(III)inamide-GDP = adenosylcob(III)alamin 5'-phosphate + GMP + H(+). It functions in the pathway cofactor biosynthesis; adenosylcobalamin biosynthesis; adenosylcobalamin from cob(II)yrinate a,c-diamide: step 7/7. In terms of biological role, joins adenosylcobinamide-GDP and alpha-ribazole to generate adenosylcobalamin (Ado-cobalamin). Also synthesizes adenosylcobalamin 5'-phosphate from adenosylcobinamide-GDP and alpha-ribazole 5'-phosphate. The polypeptide is Adenosylcobinamide-GDP ribazoletransferase (Salmonella choleraesuis (strain SC-B67)).